Here is a 156-residue protein sequence, read N- to C-terminus: Deoxyuridine 5'-triphosphate nucleotidohydrolase (156 aa).

Residues R76 to G78, N89, T93 to D95, and K103 contribute to the substrate site.

The protein belongs to the dUTPase family. Mg(2+) serves as cofactor.

The enzyme catalyses dUTP + H2O = dUMP + diphosphate + H(+). The protein operates within pyrimidine metabolism; dUMP biosynthesis; dUMP from dCTP (dUTP route): step 2/2. In terms of biological role, this enzyme is involved in nucleotide metabolism: it produces dUMP, the immediate precursor of thymidine nucleotides and it decreases the intracellular concentration of dUTP so that uracil cannot be incorporated into DNA. The polypeptide is Deoxyuridine 5'-triphosphate nucleotidohydrolase (Rhizobium etli (strain ATCC 51251 / DSM 11541 / JCM 21823 / NBRC 15573 / CFN 42)).